A 613-amino-acid chain; its full sequence is Spastin (613 aa).

The tract at residues 1 to 42 (MNSPGGRGKKKGSAGSSSAPPAAGASPSAPSGPAPPAPPAGA) is disordered. The Cytoplasmic portion of the chain corresponds to 1 to 61 (MNSPGGRGKK…KRNLYYFSYP (61 aa)). Low complexity predominate over residues 13-29 (SAGSSSAPPAAGASPSA). Positions 30–39 (PSGPAPPAPP) are enriched in pro residues. The helical intramembrane region spans 62 to 82 (LFAAFALLRFVAFQLGLLVAW). The Cytoplasmic portion of the chain corresponds to 83–613 (LCERLSRGAL…WNKDFGDTTV (531 aa)). An MIT domain is found at 117–192 (HKRAFECISM…AMAKDRLQLL (76 aa)). The segment at 224–312 (SESGAVPKKK…PAARKKKDTK (89 aa)) is disordered. Composition is skewed to polar residues over residues 237–257 (THTS…STGL), 264–274 (PSYSGISTASV), and 281–299 (PATS…NKPS). 379-386 (GPPGNGKT) lines the ATP pocket.

It belongs to the AAA ATPase family. Spastin subfamily. As to quaternary structure, homohexamer. The homohexamer is stabilized by ATP-binding. The homohexamer may adopt a ring conformation through which microtubules pass prior to being severed. Interacts with microtubules.

Its subcellular location is the membrane. The protein resides in the cytoplasm. It localises to the cytoskeleton. The protein localises to the microtubule organizing center. It is found in the centrosome. Its subcellular location is the perinuclear region. The protein resides in the nucleus. The enzyme catalyses n ATP + n H2O + a microtubule = n ADP + n phosphate + (n+1) alpha/beta tubulin heterodimers.. ATP-dependent microtubule severing protein that specifically recognizes and cuts microtubules that are polyglutamylated. Preferentially recognizes and acts on microtubules decorated with short polyglutamate tails: severing activity increases as the number of glutamates per tubulin rises from one to eight, but decreases beyond this glutamylation threshold. Microtubule severing promotes reorganization of cellular microtubule arrays and the release of microtubules from the centrosome following nucleation. Required for membrane traffic from the endoplasmic reticulum (ER) to the Golgi and for completion of the abscission stage of cytokinesis. Also plays a role in axon growth and the formation of axonal branches. The protein is Spastin of Gallus gallus (Chicken).